The chain runs to 531 residues: Polyamine aminopropyltransferase 1 (531 aa).

7 consecutive transmembrane segments (helical) span residues phenylalanine 27–leucine 47, valine 59–alanine 79, glycine 96–leucine 116, alanine 122–methionine 142, methionine 160–leucine 180, glycine 188–phenylalanine 208, and alanine 218–alanine 238. Residues valine 205 to proline 476 form a spermidine synthase region. In terms of domain architecture, PABS spans threonine 233 to proline 471. Glutamine 263 contributes to the S-methyl-5'-thioadenosine binding site. Histidine 298 and aspartate 320 together coordinate spermidine. S-methyl-5'-thioadenosine is bound by residues glutamate 340 and aspartate 374–alanine 375. The active-site Proton acceptor is the aspartate 392.

The protein belongs to the spermidine/spermine synthase family. Homodimer or homotetramer.

The protein resides in the cell membrane. The enzyme catalyses S-adenosyl 3-(methylsulfanyl)propylamine + putrescine = S-methyl-5'-thioadenosine + spermidine + H(+). Its pathway is amine and polyamine biosynthesis; spermidine biosynthesis; spermidine from putrescine: step 1/1. Catalyzes the irreversible transfer of a propylamine group from the amino donor S-adenosylmethioninamine (decarboxy-AdoMet) to putrescine (1,4-diaminobutane) to yield spermidine. The sequence is that of Polyamine aminopropyltransferase 1 from Streptomyces coelicolor (strain ATCC BAA-471 / A3(2) / M145).